Consider the following 490-residue polypeptide: Tektin-3 (490 aa).

Thr-7, Thr-9, and Thr-10 each carry an O-linked (GalNAc...) threonine glycan. N-linked (GlcNAc...) asparagine glycosylation is found at Asn-41, Asn-86, Asn-103, Asn-111, Asn-276, and Asn-344. The stretch at 424–451 (VHEVDDTIQTLQQRLRDAEDTLQSLVHI) forms a coiled coil.

The protein belongs to the tektin family. In terms of assembly, microtubule inner protein component of sperm flagellar doublet microtubules. Interacts with TEKT1, TEKT2, TEKT4 and TEKT5. Interacts with CCDC38. Post-translationally, N- and O-glycosylated. May be proteolytically processed during the epididymal transit of spermatozoa. In terms of processing, ubiquitinated, leading to its degradation. Deubiquitinated by USP16, promoting its stability. In terms of tissue distribution, expressed in spermatozoa. Expressed in airway epithelial cells.

The protein localises to the cytoplasm. The protein resides in the cytoskeleton. It is found in the cilium axoneme. It localises to the flagellum axoneme. Its subcellular location is the cytoplasmic vesicle. The protein localises to the secretory vesicle. The protein resides in the acrosome outer membrane. Microtubule inner protein (MIP) part of the dynein-decorated doublet microtubules (DMTs) in cilia and flagellar axoneme. Forms filamentous polymers in the walls of ciliary and flagellar microtubules. Required for normal sperm mobility. The chain is Tektin-3 (TEKT3) from Homo sapiens (Human).